The sequence spans 1304 residues: Neuronal cell adhesion molecule (1304 aa).

Positions 1-24 are cleaved as a signal peptide; sequence MQLKIMPKKKRLSAGRVPLILFLC. The Extracellular portion of the chain corresponds to 25 to 1167; it reads QMISALEVPL…ASRQVDIATQ (1143 aa). Ig-like domains follow at residues 46-134 and 141-235; these read PTIT…AAVS and PSRS…QPIS. 2 cysteine pairs are disulfide-bonded: C68–C123 and C167–C218. A glycan (N-linked (GlcNAc...) asparagine) is linked at N83. Residues N223, N245, N251, N276, and N314 are each glycosylated (N-linked (GlcNAc...) asparagine). 4 Ig-like domains span residues 267-356, 361-448, 454-541, and 545-632; these read PPTF…ISVR, PYWI…AFVN, PRIL…VHLE, and PTWI…AVLS. 2 disulfides stabilise this stretch: C292–C340 and C382–C432. N-linked (GlcNAc...) asparagine glycans are attached at residues N433 and N507. 2 cysteine pairs are disulfide-bonded: C476/C525 and C567/C616. Residues N619, N716, and N802 are each glycosylated (N-linked (GlcNAc...) asparagine). Fibronectin type-III domains are found at residues 649 to 744, 746 to 843, 848 to 950, 954 to 1051, and 1064 to 1156; these read PPFD…TKAS, PDKN…SGED, APGN…TPEG, APSS…VDEA, and QAVN…TGPA. Residue N858 is glycosylated (N-linked (GlcNAc...) (complex) asparagine). 6 N-linked (GlcNAc...) asparagine glycosylation sites follow: N993, N1009, N1019, N1072, N1083, and N1115. The helical transmembrane segment at 1168-1190 threads the bilayer; the sequence is GWFIGLMCAVALLILILLIVCFI. At 1191–1304 the chain is on the cytoplasmic side; sequence RRNKGGKYPV…SPVNAMNSFV (114 aa). Over residues 1199 to 1219 the composition is skewed to basic and acidic residues; the sequence is PVKEKEDAHADPEIQPMKEDD. The segment at 1199–1304 is disordered; the sequence is PVKEKEDAHA…SPVNAMNSFV (106 aa). T1221 carries the phosphothreonine modification. Position 1225 is a phosphotyrosine (Y1225). The residue at position 1226 (S1226) is a Phosphoserine. A compositionally biased stretch (basic and acidic residues) spans 1241 to 1250; it reads PSDRTVKKED. 6 positions are modified to phosphoserine: S1251, S1254, S1271, S1290, S1291, and S1295. A compositionally biased stretch (polar residues) spans 1288–1304; that stretch reads NESSEAPSPVNAMNSFV.

This sequence belongs to the immunoglobulin superfamily. L1/neurofascin/NgCAM family. Constituent of a NFASC/NRCAM/ankyrin-G complex. Detected in a complex with CNTN1 and PTPRB. Interacts with GLDN/gliomedin. Interacts with MYOC. As to expression, detected in all the examined tissues. In the brain it was detected in the amygdala, caudate nucleus, corpus callosum, hippocampus, hypothalamus, substantia nigra, subthalamic nucleus and thalamus.

It localises to the cell membrane. Its subcellular location is the cell projection. The protein resides in the axon. It is found in the secreted. Functionally, cell adhesion protein that is required for normal responses to cell-cell contacts in brain and in the peripheral nervous system. Plays a role in neurite outgrowth in response to contactin binding. Plays a role in mediating cell-cell contacts between Schwann cells and axons. Plays a role in the formation and maintenance of the nodes of Ranvier on myelinated axons. Nodes of Ranvier contain clustered sodium channels that are crucial for the saltatory propagation of action potentials along myelinated axons. During development, nodes of Ranvier are formed by the fusion of two heminodes. Required for normal clustering of sodium channels at heminodes; not required for the formation of mature nodes with normal sodium channel clusters. Required, together with GLDN, for maintaining NFASC and sodium channel clusters at mature nodes of Ranvier. The protein is Neuronal cell adhesion molecule (NRCAM) of Homo sapiens (Human).